A 215-amino-acid chain; its full sequence is Secretory component protein psh3 (215 aa).

Residues 1-21 are Cytoplasmic-facing; it reads MAKRSIFRFADEKGLKVAARY. A helical membrane pass occupies residues 22–42; it reads GVLMSTSFIFALLFHSSVADV. The Extracellular portion of the chain corresponds to 43–67; it reads NTLWSPGPESAFDAAETYYTLVAGS. Residues 68-88 traverse the membrane as a helical segment; it reads HFIVKYTVYTIMGLNMIFHLI. Residues 89-105 lie on the Cytoplasmic side of the membrane; sequence QATGAKGDDKLFFYSST. The helical transmembrane segment at 106–126 threads the bilayer; the sequence is LLYLTALILFIVNVAPSMLVV. Residues 127–147 are Extracellular-facing; sequence KLQNYVQFPRNMHLSVLAASH. The helical transmembrane segment at 148 to 168 threads the bilayer; it reads VLVEFLLAGVILIQLGYVFGY. Over 169–215 the chain is Cytoplasmic; sequence HVQSIQQREYAEDMREQELAEKAKLESESATTQSVETVSTESVSKRK. The segment at 190–215 is disordered; the sequence is KAKLESESATTQSVETVSTESVSKRK. Residues 196 to 215 show a composition bias toward low complexity; that stretch reads ESATTQSVETVSTESVSKRK.

It to yeast SHR3. Monomer.

Its subcellular location is the endoplasmic reticulum membrane. Its function is as follows. Involved in amino acid permease processing and required for the efficient translocation of structurally related amino acid permeases from the endoplasmic reticulum to the plasma membrane. This Schizosaccharomyces pombe (strain 972 / ATCC 24843) (Fission yeast) protein is Secretory component protein psh3 (psh3).